Consider the following 568-residue polypeptide: PTS system lactose-specific EIICB component (568 aa).

One can recognise a PTS EIIC type-3 domain in the interval 7 to 409 (LIEKGKPFFE…VVDTIIYYPF (403 aa)). The next 9 helical transmembrane spans lie at 30 to 50 (GFIA…IAYV), 62 to 82 (IETF…FFVG), 103 to 123 (INFL…AAEP), 128 to 148 (GFLT…AAFV), 183 to 203 (FTVS…TLGV), 222 to 242 (GYLG…VGIH), 283 to 303 (FIAT…FMWI), 339 to 359 (IFFV…KFFV), and 389 to 409 (VLSF…YYPF). One can recognise a PTS EIIB type-3 domain in the interval 466–568 (ETNVLVLCAG…ALAFVQQQFD (103 aa)). The Phosphocysteine intermediate; for EIIB activity role is filled by Cys473. Phosphocysteine; by EIIA is present on Cys473.

Its subcellular location is the cell membrane. It carries out the reaction lactose(out) + N(pros)-phospho-L-histidyl-[protein] = lactose 6-phosphate(in) + L-histidyl-[protein]. In terms of biological role, the phosphoenolpyruvate-dependent sugar phosphotransferase system (sugar PTS), a major carbohydrate active transport system, catalyzes the phosphorylation of incoming sugar substrates concomitantly with their translocation across the cell membrane. The enzyme II LacEF PTS system is involved in lactose transport. The protein is PTS system lactose-specific EIICB component of Lactococcus lactis subsp. lactis (Streptococcus lactis).